A 131-amino-acid chain; its full sequence is Small ribosomal subunit protein uS8 (131 aa).

It belongs to the universal ribosomal protein uS8 family. Part of the 30S ribosomal subunit. Contacts proteins S5 and S12.

Functionally, one of the primary rRNA binding proteins, it binds directly to 16S rRNA central domain where it helps coordinate assembly of the platform of the 30S subunit. The polypeptide is Small ribosomal subunit protein uS8 (Blochmanniella pennsylvanica (strain BPEN)).